The primary structure comprises 498 residues: Lipase 3 (498 aa).

An intrachain disulfide couples Cys60 to Cys91. Asn193 is a glycosylation site (N-linked (GlcNAc...) asparagine). Residue Ser200 is the Acyl-ester intermediate of the active site. An N-linked (GlcNAc...) asparagine glycan is attached at Asn384. The active-site Charge relay system is the His409. Asn418 carries an N-linked (GlcNAc...) asparagine glycan.

It belongs to the type-B carboxylesterase/lipase family.

It catalyses the reaction a triacylglycerol + H2O = a diacylglycerol + a fatty acid + H(+). The chain is Lipase 3 (LIP3) from Yarrowia lipolytica (strain CLIB 122 / E 150) (Yeast).